Reading from the N-terminus, the 125-residue chain is Protein ApaG (125 aa).

The 125-residue stretch at 1 to 125 (MIDAPRIIVQ…FRLAIPSLIN (125 aa)) folds into the ApaG domain.

This Edwardsiella ictaluri (strain 93-146) protein is Protein ApaG.